We begin with the raw amino-acid sequence, 300 residues long: Probable alpha-L-glutamate ligase (300 aa).

Positions 104 to 287 (LQLLARQGID…IAGKMISWIE (184 aa)) constitute an ATP-grasp domain. Residues Lys-141, 178–179 (EY), Asp-187, and 211–213 (RSN) each bind ATP. The Mg(2+) site is built by Asp-248, Glu-260, and Asn-262. Mn(2+) contacts are provided by Asp-248, Glu-260, and Asn-262.

It belongs to the RimK family. The cofactor is Mg(2+). Requires Mn(2+) as cofactor.

In Enterobacter sp. (strain 638), this protein is Probable alpha-L-glutamate ligase.